Consider the following 82-residue polypeptide: HQQFHCPSAEGNQVKKVFSCKNCDKTYVSLGALKMHIRTHTLPCKCPICGKAFSRPWLLQGHIRTHTGEKPFSCQHCQSAFV.

4 consecutive C2H2-type zinc fingers follow at residues 1-5, 18-40, 44-66, and 72-82; these read HQQFH, FSCK…IRTH, CKCP…IRTH, and FSCQHCQSAFV.

Belongs to the snail C2H2-type zinc-finger protein family.

The protein resides in the nucleus. The polypeptide is Escargot/snail protein homolog (Calliphora vicina (Blue blowfly)).